A 197-amino-acid polypeptide reads, in one-letter code: Probable GTP-binding protein EngB (197 aa).

The region spanning 22–195 (GFPEIGLAGR…WQWIEAHTVG (174 aa)) is the EngB-type G domain. Residues 30-37 (GRSNVGKS), 57-61 (GKTQT), 75-78 (DVPG), 142-145 (TKSD), and 174-176 (FSA) contribute to the GTP site. Positions 37 and 59 each coordinate Mg(2+).

It belongs to the TRAFAC class TrmE-Era-EngA-EngB-Septin-like GTPase superfamily. EngB GTPase family. Mg(2+) serves as cofactor.

Its function is as follows. Necessary for normal cell division and for the maintenance of normal septation. This is Probable GTP-binding protein EngB from Lactiplantibacillus plantarum (strain ATCC BAA-793 / NCIMB 8826 / WCFS1) (Lactobacillus plantarum).